Here is a 292-residue protein sequence, read N- to C-terminus: MKLKSLLSVFTISIVALTSACSTKNAGPSADPDKLIVALIPDENAATVIQDNQGLKDYLTEAFDKEIELVVTTDYSSMIEAARNDRLDLAYFGPLSYVLAKAVSDIEPFAARIKGGTKTYNSCIIGNTKKGVTSFDDIKGTTFALGDPASTSSRLFPELTLAENGLTKGKDFQGVFLGSHDAVALAVQNGNAQAGGMACPILKSLKKKGVIDPSKVTTIAQSSPIPQYPWTMRSTLSPELKEKIRFTFLDLDSDKVLKPFNADGFASITDSDYDGIRKAGKLLGLDLSKFVK.

A signal peptide spans 1–20 (MKLKSLLSVFTISIVALTSA). The N-palmitoyl cysteine moiety is linked to residue cysteine 21. Cysteine 21 carries S-diacylglycerol cysteine lipidation.

The protein belongs to the phosphate/phosphite/phosphonate binding protein family. The complex may be composed of two ATP-binding proteins (PhnC2), two transmembrane proteins (PhnE2) and a solute-binding protein (PhnD2).

The protein resides in the cell membrane. Its function is as follows. Probably part of the ABC transporter complex PhnC2D2E2. Binds strongly to methylphosphonate (MPn), ethylphosphonate (EPn) and inorganic phosphite. The protein is Probable ABC transporter phosphonate/phosphite binding protein PhnD2 of Prochlorococcus marinus (strain MIT 9301).